Consider the following 729-residue polypeptide: Rho GTPase-activating protein 28 (729 aa).

The segment at 1-78 (MEVEDSGGVV…ASVDSSASME (78 aa)) is disordered. The span at 37-49 (LSRKSIPRCRRIN) shows a compositional bias: basic residues. Low complexity predominate over residues 63–76 (SRSNSQASVDSSAS). A Phosphoserine modification is found at S70. T164 is subject to Phosphothreonine. The tract at residues 180-234 (FGVSESPPSDSCEHATQLDGTKEEKDLPGVTKTSRPLPDDASLSSTTLSNGAQDE) is disordered. The segment covering 221–231 (SLSSTTLSNGA) has biased composition (polar residues). In terms of domain architecture, Rho-GAP spans 384-581 (VPLTVLLDND…LMLKYQKILW (198 aa)).

In terms of biological role, GTPase activator for the Rho-type GTPases by converting them to an inactive GDP-bound state. In Mus musculus (Mouse), this protein is Rho GTPase-activating protein 28 (Arhgap28).